The sequence spans 280 residues: Bifunctional protein FolD (280 aa).

NADP(+) contacts are provided by residues 161–163 (GRS), S186, and I227.

The protein belongs to the tetrahydrofolate dehydrogenase/cyclohydrolase family. As to quaternary structure, homodimer.

It catalyses the reaction (6R)-5,10-methylene-5,6,7,8-tetrahydrofolate + NADP(+) = (6R)-5,10-methenyltetrahydrofolate + NADPH. It carries out the reaction (6R)-5,10-methenyltetrahydrofolate + H2O = (6R)-10-formyltetrahydrofolate + H(+). It functions in the pathway one-carbon metabolism; tetrahydrofolate interconversion. Catalyzes the oxidation of 5,10-methylenetetrahydrofolate to 5,10-methenyltetrahydrofolate and then the hydrolysis of 5,10-methenyltetrahydrofolate to 10-formyltetrahydrofolate. This Caldanaerobacter subterraneus subsp. tengcongensis (strain DSM 15242 / JCM 11007 / NBRC 100824 / MB4) (Thermoanaerobacter tengcongensis) protein is Bifunctional protein FolD.